The following is a 74-amino-acid chain: Ubiquitin-like protein FUBI (74 aa).

It belongs to the ubiquitin family.

Its function is as follows. Confers arsenite resistance. The polypeptide is Ubiquitin-like protein FUBI (FAU) (Cricetulus griseus (Chinese hamster)).